We begin with the raw amino-acid sequence, 373 residues long: tRNA-specific 2-thiouridylase MnmA (373 aa).

Residues 12 to 19 (GMSGGVDS) and M38 contribute to the ATP site. Positions 98-100 (NPD) are interaction with target base in tRNA. C103 (nucleophile) is an active-site residue. Residues C103 and C200 are joined by a disulfide bond. Position 127 (G127) interacts with ATP. The tract at residues 150–152 (KDQ) is interaction with tRNA. The Cysteine persulfide intermediate role is filled by C200. The tract at residues 312 to 313 (RY) is interaction with tRNA.

Belongs to the MnmA/TRMU family.

It is found in the cytoplasm. The enzyme catalyses S-sulfanyl-L-cysteinyl-[protein] + uridine(34) in tRNA + AH2 + ATP = 2-thiouridine(34) in tRNA + L-cysteinyl-[protein] + A + AMP + diphosphate + H(+). Its function is as follows. Catalyzes the 2-thiolation of uridine at the wobble position (U34) of tRNA, leading to the formation of s(2)U34. This chain is tRNA-specific 2-thiouridylase MnmA, found in Streptococcus pneumoniae (strain JJA).